The chain runs to 239 residues: uncharacterized protein (239 aa).

A run of 6 helical transmembrane segments spans residues 30–50, 76–96, 107–127, 157–177, 188–208, and 214–234; these read VALL…IELI, LYLG…IFII, LIPI…FGYI, FIIL…FQIL, MMLS…AIIT, and LIQL…ILVL.

This sequence belongs to the TatC family.

Its subcellular location is the plastid. It is found in the chloroplast membrane. This is an uncharacterized protein from Cyanidium caldarium (Red alga).